We begin with the raw amino-acid sequence, 239 residues long: MRPSGRKIDQMRKVSFERNFSKHAEGSCLVKFGDTHVLCTASLEEKTPPWLRNTGKGWVTAEYGMLPRATGERMKREAAAGKQGGRTQEIQRLIGRSLRAVVDLQALGERQITLDCDVIQADGGTRTASITGGWIALYDCLKWMESRNMIKVDRVLKDHVAAISCGIFASQPVIDLDYLEDSSAETDANFVMTGTGGIVEIQGTAEGTPFSEGEFTSLMQLARNGIGELVALQKQAVEG.

Phosphate-binding positions include arginine 86 and 124 to 126 (GTR).

It belongs to the RNase PH family. In terms of assembly, homohexameric ring arranged as a trimer of dimers.

It carries out the reaction tRNA(n+1) + phosphate = tRNA(n) + a ribonucleoside 5'-diphosphate. Its function is as follows. Phosphorolytic 3'-5' exoribonuclease that plays an important role in tRNA 3'-end maturation. Removes nucleotide residues following the 3'-CCA terminus of tRNAs; can also add nucleotides to the ends of RNA molecules by using nucleoside diphosphates as substrates, but this may not be physiologically important. Probably plays a role in initiation of 16S rRNA degradation (leading to ribosome degradation) during starvation. The chain is Ribonuclease PH from Rhizobium johnstonii (strain DSM 114642 / LMG 32736 / 3841) (Rhizobium leguminosarum bv. viciae).